The sequence spans 329 residues: Oligopeptide transport ATP-binding protein AppF (329 aa).

The ABC transporter domain maps to 10–261 (LELRDVKKYF…PLHPYTQALL (252 aa)). Residue 53–60 (GESGCGKS) coordinates ATP.

This sequence belongs to the ABC transporter superfamily.

The protein resides in the cell membrane. This protein is a component of an oligopeptide permease, a binding protein-dependent transport system. This APP system can completely substitute for the OPP system in both sporulation and genetic competence, though, unlike OPP, is incapable of transporting tripeptides. Probably responsible for energy coupling to the transport system. This Bacillus subtilis (strain 168) protein is Oligopeptide transport ATP-binding protein AppF (appF).